The following is a 436-amino-acid chain: UPF0597 protein YhaM (436 aa).

Belongs to the UPF0597 family.

This is UPF0597 protein YhaM from Salmonella heidelberg (strain SL476).